A 198-amino-acid chain; its full sequence is Recombination protein RecR (198 aa).

The segment at 57 to 72 (CSVCGHITENDPCYIC) adopts a C4-type zinc-finger fold. The 96-residue stretch at 80–175 (SVICVVEDDK…KVTRLAQGLS (96 aa)) folds into the Toprim domain.

It belongs to the RecR family.

In terms of biological role, may play a role in DNA repair. It seems to be involved in an RecBC-independent recombinational process of DNA repair. It may act with RecF and RecO. In Staphylococcus aureus (strain MSSA476), this protein is Recombination protein RecR.